The following is a 1025-amino-acid chain: Putative calcium-transporting ATPase 11, plasma membrane-type (1025 aa).

Residues 1-157 (MSNLLKDFEV…NRYTEKPARS (157 aa)) lie on the Cytoplasmic side of the membrane. An interaction with calmodulin region spans residues 19 to 30 (ARQRWRSSVGLV). A helical membrane pass occupies residues 158-178 (FLTFVWEALQDITLIILMVCA). Over 179–196 (VVSIGVGVATEGFPKGMY) the chain is Lumenal. A helical transmembrane segment spans residues 197 to 217 (DGTGILLSIILVVMVTAISDY). Over 218–345 (KQSLQFRDLD…EDETPLQVKL (128 aa)) the chain is Cytoplasmic. Residues 346 to 365 (NGVATIIGKIGLGFAVLTFV) traverse the membrane as a helical segment. Topologically, residues 366-395 (VLCIRFVVEKATAGSITEWSSEDALTLLDY) are lumenal. Residues 396 to 413 (FAIAVTIIVVAVPEGLPL) traverse the membrane as a helical segment. Residues 414-801 (AVTLSLAFAM…KWGRAVYINI (388 aa)) are Cytoplasmic-facing. Asp-451 functions as the 4-aspartylphosphate intermediate in the catalytic mechanism. Asp-746 and Asp-750 together coordinate Mg(2+). Residues 802–820 (QKFVQFQLTVNVVALIINF) traverse the membrane as a helical segment. Residues 821 to 831 (VSACITGSAPL) lie on the Lumenal side of the membrane. The helical transmembrane segment at 832–852 (TAVQLLWVNMIMDTLGALALA) threads the bilayer. At 853–872 (TEPPNEGLMKRQPIGRTASF) the chain is on the cytoplasmic side. A helical transmembrane segment spans residues 873–895 (ITRAMWRNIIGQSIYQLIVLGIL). At 896 to 907 (NFAGKQILNLNG) the chain is on the lumenal side. Residues 908–929 (PDSTIVLNTIIFNSFVFCQVFN) traverse the membrane as a helical segment. Over 930–947 (EVNSREIEKINVFEGMFK) the chain is Cytoplasmic. Residues 948-969 (SWVFVAVMTATVGFQVIIVEFL) traverse the membrane as a helical segment. The Lumenal portion of the chain corresponds to 970–979 (GAFASTVPLS). Residues 980–1001 (WQHWLLCILIGSVSMILAVGLK) form a helical membrane-spanning segment. At 1002 to 1025 (CIPVESNRHHDGYELLPSGPSDSA) the chain is on the cytoplasmic side.

It belongs to the cation transport ATPase (P-type) (TC 3.A.3) family. Type IIB subfamily.

Its subcellular location is the membrane. It carries out the reaction Ca(2+)(in) + ATP + H2O = Ca(2+)(out) + ADP + phosphate + H(+). Its activity is regulated as follows. Activated by calmodulin. In terms of biological role, this magnesium-dependent enzyme catalyzes the hydrolysis of ATP coupled with the translocation of calcium from the cytosol out of the cell or into organelles. This chain is Putative calcium-transporting ATPase 11, plasma membrane-type (ACA11), found in Arabidopsis thaliana (Mouse-ear cress).